Reading from the N-terminus, the 281-residue chain is Eukaryotic translation initiation factor 3 subunit G (281 aa).

Positions 1 to 32 (MSRPAGRTDWAEEDDETELALPSQTVVKNKDG) are disordered. In terms of domain architecture, RRM spans 202–280 (ATLRVTNVSE…LILRVEFAKK (79 aa)).

It belongs to the eIF-3 subunit G family. In terms of assembly, component of the eukaryotic translation initiation factor 3 (eIF-3) complex.

The protein localises to the cytoplasm. RNA-binding component of the eukaryotic translation initiation factor 3 (eIF-3) complex, which is involved in protein synthesis of a specialized repertoire of mRNAs and, together with other initiation factors, stimulates binding of mRNA and methionyl-tRNAi to the 40S ribosome. The eIF-3 complex specifically targets and initiates translation of a subset of mRNAs involved in cell proliferation. This subunit can bind 18S rRNA. This chain is Eukaryotic translation initiation factor 3 subunit G, found in Phaeosphaeria nodorum (strain SN15 / ATCC MYA-4574 / FGSC 10173) (Glume blotch fungus).